We begin with the raw amino-acid sequence, 220 residues long: Cell division protein SepF (220 aa).

Positions 33–82 (GAARGYARRPREDRFEEEGYIDRAGREYDDRPAPREYDEPPIYRGGYDEP) are disordered. Residues 52-70 (YIDRAGREYDDRPAPREYD) show a composition bias toward basic and acidic residues.

Belongs to the SepF family. Homodimer. Interacts with FtsZ.

Its subcellular location is the cytoplasm. Cell division protein that is part of the divisome complex and is recruited early to the Z-ring. Probably stimulates Z-ring formation, perhaps through the cross-linking of FtsZ protofilaments. Its function overlaps with FtsA. This Mycobacterium sp. (strain JLS) protein is Cell division protein SepF.